The sequence spans 276 residues: Large ribosomal subunit protein uL2 (276 aa).

Disordered stretches follow at residues 14 to 58 (RNAS…GGGH) and 221 to 276 (TRGE…KNRK). A compositionally biased stretch (polar residues) spans 16-27 (ASVSDFSELTRS). Over residues 255 to 276 (RRPKKASNKMIVRRRPSGKNRK) the composition is skewed to basic residues.

Belongs to the universal ribosomal protein uL2 family. As to quaternary structure, part of the 50S ribosomal subunit. Forms a bridge to the 30S subunit in the 70S ribosome.

One of the primary rRNA binding proteins. Required for association of the 30S and 50S subunits to form the 70S ribosome, for tRNA binding and peptide bond formation. It has been suggested to have peptidyltransferase activity; this is somewhat controversial. Makes several contacts with the 16S rRNA in the 70S ribosome. The polypeptide is Large ribosomal subunit protein uL2 (Bifidobacterium longum subsp. infantis (strain ATCC 15697 / DSM 20088 / JCM 1222 / NCTC 11817 / S12)).